Reading from the N-terminus, the 515-residue chain is Sterol 14-alpha demethylase cyp51A (515 aa).

The chain crosses the membrane as a helical span at residues 7-29; sequence LTAYMAVAVLTAILLNVVYQLFF. N-linked (GlcNAc...) asparagine glycans are attached at residues asparagine 33 and asparagine 269. Residue cysteine 454 coordinates heme. N-linked (GlcNAc...) asparagine glycosylation is present at asparagine 512.

It belongs to the cytochrome P450 family. Heme serves as cofactor.

It is found in the endoplasmic reticulum membrane. It carries out the reaction a 14alpha-methyl steroid + 3 reduced [NADPH--hemoprotein reductase] + 3 O2 = a Delta(14) steroid + formate + 3 oxidized [NADPH--hemoprotein reductase] + 4 H2O + 4 H(+). The enzyme catalyses a 14alpha-methyl steroid + reduced [NADPH--hemoprotein reductase] + O2 = a 14alpha-hydroxymethyl steroid + oxidized [NADPH--hemoprotein reductase] + H2O + H(+). It catalyses the reaction a 14alpha-hydroxymethyl steroid + reduced [NADPH--hemoprotein reductase] + O2 = a 14alpha-formyl steroid + oxidized [NADPH--hemoprotein reductase] + 2 H2O + H(+). The catalysed reaction is a 14alpha-formyl steroid + reduced [NADPH--hemoprotein reductase] + O2 = a Delta(14) steroid + formate + oxidized [NADPH--hemoprotein reductase] + H2O + 2 H(+). It carries out the reaction lanosterol + 3 reduced [NADPH--hemoprotein reductase] + 3 O2 = 4,4-dimethyl-5alpha-cholesta-8,14,24-trien-3beta-ol + formate + 3 oxidized [NADPH--hemoprotein reductase] + 4 H2O + 4 H(+). The enzyme catalyses lanosterol + reduced [NADPH--hemoprotein reductase] + O2 = 32-hydroxylanosterol + oxidized [NADPH--hemoprotein reductase] + H2O + H(+). It catalyses the reaction 32-hydroxylanosterol + reduced [NADPH--hemoprotein reductase] + O2 = 32-oxolanosterol + oxidized [NADPH--hemoprotein reductase] + 2 H2O + H(+). The catalysed reaction is 32-oxolanosterol + reduced [NADPH--hemoprotein reductase] + O2 = 4,4-dimethyl-5alpha-cholesta-8,14,24-trien-3beta-ol + formate + oxidized [NADPH--hemoprotein reductase] + H2O + 2 H(+). It carries out the reaction eburicol + 3 reduced [NADPH--hemoprotein reductase] + 3 O2 = 14-demethyleburicol + formate + 3 oxidized [NADPH--hemoprotein reductase] + 4 H2O + 4 H(+). The enzyme catalyses eburicol + reduced [NADPH--hemoprotein reductase] + O2 = 32-hydroxyeburicol + oxidized [NADPH--hemoprotein reductase] + H2O + H(+). It catalyses the reaction 32-hydroxyeburicol + reduced [NADPH--hemoprotein reductase] + O2 = 32-oxoeburicol + oxidized [NADPH--hemoprotein reductase] + 2 H2O + H(+). The catalysed reaction is 32-oxoeburicol + reduced [NADPH--hemoprotein reductase] + O2 = 14-demethyleburicol + formate + oxidized [NADPH--hemoprotein reductase] + H2O + 2 H(+). The protein operates within steroid metabolism; ergosterol biosynthesis. Its activity is regulated as follows. The sterol 14-alpha demethylase activity is inhibited by azole compounds. Activity is inhibited by the novel and long-acting fungicidal azole, PC1244. Functionally, sterol 14alpha-demethylase, encoded by cyp51A and cyp51B, that plays a critical role in the third module of ergosterol biosynthesis pathway, being ergosterol the major sterol component in fungal membranes that participates in a variety of functions. The third module or late pathway involves the ergosterol synthesis itself through consecutive reactions that mainly occur in the endoplasmic reticulum (ER) membrane. In filamentous fungi, during the initial step of this module, lanosterol (lanosta-8,24-dien-3beta-ol) can be metabolized to eburicol. Sterol 14alpha-demethylase catalyzes the three-step oxidative removal of the 14alpha-methyl group (C-32) of both these sterols in the form of formate, and converts eburicol and lanosterol to 14-demethyleburicol (4,4,24-trimethylergosta-8,14,24(28)-trienol) and 4,4-dimethyl-5alpha-cholesta-8,14,24-trien-3beta-ol, respectively, which are further metabolized by other enzymes in the pathway to ergosterol. Can also use substrates not intrinsic to fungi, such as 24,25-dihydrolanosterol (DHL), producing 4,4'-dimethyl-8,14-cholestadien-3-beta-ol, but at lower rates than the endogenous substrates. In terms of biological role, as a target of azole drugs, plays a crucial role in azole susceptibility. This chain is Sterol 14-alpha demethylase cyp51A, found in Aspergillus fumigatus (strain ATCC MYA-4609 / CBS 101355 / FGSC A1100 / Af293) (Neosartorya fumigata).